Consider the following 159-residue polypeptide: Probable deoxyuridine 5'-triphosphate nucleotidohydrolase (159 aa).

The protein belongs to the dCTP deaminase family. Archaeal dUTPase subfamily.

The catalysed reaction is dUTP + H2O = dUMP + diphosphate + H(+). It functions in the pathway pyrimidine metabolism; dUMP biosynthesis; dUMP from dCTP (dUTP route): step 2/2. Its function is as follows. This enzyme is involved in nucleotide metabolism: it produces dUMP, the immediate precursor of thymidine nucleotides and it decreases the intracellular concentration of dUTP so that uracil cannot be incorporated into DNA. In Aeropyrum pernix (strain ATCC 700893 / DSM 11879 / JCM 9820 / NBRC 100138 / K1), this protein is Probable deoxyuridine 5'-triphosphate nucleotidohydrolase.